Reading from the N-terminus, the 443-residue chain is MSKRQENKKIAFIHPDLGIGGAERLVVDAAVGLQDFGHDIIIYTSHCDLTHCFEEVSSGQLKVSVHGDSLPTNLFGKLHIFFAILRQFYLVCWLIFTGTIKNYDYFIVDQLSFCIPLLKMFCNSNCQVLFYCHFPDQLLVRRTSFLKKLYRVPFDAIEEYTTGSSDQIVVNSNFTKQIFHDTFKKLNHIDPQVVYPCVDTETIVDTNASSNSEVSKFFKDSPFFLSINRFERSKNIELAIKSFARMNKLMVTKAIKSFARMNKLMVTNKKPRLVIAGGYDSRVAENVEYLAELSTLCDELNLINFTIRGKLIMMPPSVDVLFLPSISTQLKNSLIQQTELLLYTPPREHFGIVPLEAMLAKTPVLAINFGGPLETVVNYNGNNLDEATGYTETGDFTKWSKIIMKHYNLDESTKIKLGENGRNRVINKFSRKKLAQSLDNILN.

Residues 80–100 (IFFAILRQFYLVCWLIFTGTI) form a helical membrane-spanning segment. Residues asparagine 173, asparagine 207, and asparagine 304 are each glycosylated (N-linked (GlcNAc...) asparagine).

Belongs to the glycosyltransferase group 1 family.

It is found in the endoplasmic reticulum membrane. The catalysed reaction is a beta-D-Man-(1-&gt;4)-beta-D-GlcNAc-(1-&gt;4)-alpha-D-GlcNAc-diphospho-di-trans,poly-cis-dolichol + GDP-alpha-D-mannose = an alpha-D-Man-(1-&gt;3)-beta-D-Man-(1-&gt;4)-beta-D-GlcNAc-(1-&gt;4)-alpha-D-GlcNAc-diphospho-di-trans,poly-cis-dolichol + GDP + H(+). The enzyme catalyses an alpha-D-Man-(1-&gt;3)-beta-D-Man-(1-&gt;4)-beta-D-GlcNAc-(1-&gt;4)-alpha-D-GlcNAc-diphospho-di-trans,poly-cis-dolichol + GDP-alpha-D-mannose = an alpha-D-Man-(1-&gt;3)-[alpha-D-Man-(1-&gt;6)]-beta-D-Man-(1-&gt;4)-beta-D-GlcNAc-(1-&gt;4)-alpha-D-GlcNAc-diphospho-di-trans,poly-cis-dolichol + GDP + H(+). The protein operates within protein modification; protein glycosylation. In terms of biological role, mannosylates Man(2)GlcNAc(2)-dolichol diphosphate and Man(1)GlcNAc(2)-dolichol diphosphate to form Man(3)GlcNAc(2)-dolichol diphosphate. This is Alpha-1,3/1,6-mannosyltransferase ALG2 (ALG2) from Candida albicans (strain SC5314 / ATCC MYA-2876) (Yeast).